The chain runs to 316 residues: Ecto-ADP-ribosyltransferase 5 (316 aa).

The first 23 residues, 1–23 (MIQATLLISLSCLSFYTLGSGVR), serve as a signal peptide directing secretion. Cysteine 50 and cysteine 266 form a disulfide bridge. An N-linked (GlcNAc...) asparagine glycan is attached at asparagine 68. The TR mART core domain maps to 70–261 (TRLRESWETA…MTLSSSDQMC (192 aa)). Tyrosine 107 contributes to the NAD(+) binding site. Residue asparagine 109 is glycosylated (N-linked (GlcNAc...) asparagine). Positions 168 and 188 each coordinate NAD(+). The active site involves arginine 168. Serine 191 is an active-site residue. NAD(+) is bound at residue serine 222. Glutamate 229 is a catalytic residue. Asparagine 242 and asparagine 248 each carry an N-linked (GlcNAc...) asparagine glycan.

This sequence belongs to the Arg-specific ADP-ribosyltransferase family.

The protein localises to the secreted. It is found in the membrane. The enzyme catalyses L-arginyl-[protein] + NAD(+) = N(omega)-(ADP-D-ribosyl)-L-arginyl-[protein] + nicotinamide + H(+). In Bos taurus (Bovine), this protein is Ecto-ADP-ribosyltransferase 5 (ART5).